Reading from the N-terminus, the 425-residue chain is Serine hydroxymethyltransferase (425 aa).

(6S)-5,6,7,8-tetrahydrofolate-binding positions include leucine 124 and 128–130; that span reads GHL. The residue at position 233 (lysine 233) is an N6-(pyridoxal phosphate)lysine.

This sequence belongs to the SHMT family. As to quaternary structure, homodimer. The cofactor is pyridoxal 5'-phosphate.

It is found in the cytoplasm. The catalysed reaction is (6R)-5,10-methylene-5,6,7,8-tetrahydrofolate + glycine + H2O = (6S)-5,6,7,8-tetrahydrofolate + L-serine. The protein operates within one-carbon metabolism; tetrahydrofolate interconversion. Its pathway is amino-acid biosynthesis; glycine biosynthesis; glycine from L-serine: step 1/1. Its function is as follows. Catalyzes the reversible interconversion of serine and glycine with tetrahydrofolate (THF) serving as the one-carbon carrier. This reaction serves as the major source of one-carbon groups required for the biosynthesis of purines, thymidylate, methionine, and other important biomolecules. Also exhibits THF-independent aldolase activity toward beta-hydroxyamino acids, producing glycine and aldehydes, via a retro-aldol mechanism. This chain is Serine hydroxymethyltransferase, found in Clavibacter sepedonicus (Clavibacter michiganensis subsp. sepedonicus).